The sequence spans 164 residues: Deoxyuridine 5'-triphosphate nucleotidohydrolase (164 aa).

Substrate is bound by residues 66–68 (RSG), asparagine 79, 83–85 (TVD), and lysine 93.

It belongs to the dUTPase family. Mg(2+) is required as a cofactor.

The catalysed reaction is dUTP + H2O = dUMP + diphosphate + H(+). The protein operates within pyrimidine metabolism; dUMP biosynthesis; dUMP from dCTP (dUTP route): step 2/2. Its function is as follows. This enzyme is involved in nucleotide metabolism: it produces dUMP, the immediate precursor of thymidine nucleotides and it decreases the intracellular concentration of dUTP so that uracil cannot be incorporated into DNA. The sequence is that of Deoxyuridine 5'-triphosphate nucleotidohydrolase from Rhodococcus erythropolis (strain PR4 / NBRC 100887).